Here is a 632-residue protein sequence, read N- to C-terminus: tRNA uridine 5-carboxymethylaminomethyl modification enzyme MnmG (632 aa).

Residues 15–20, V127, and S182 each bind FAD; that span reads GAGHAG. Residues 203–226 are disordered; it reads TPPRVKSSTIDYSKTEEQPGDDHP. A compositionally biased stretch (basic and acidic residues) spans 215–226; the sequence is SKTEEQPGDDHP. 274-288 provides a ligand contact to NAD(+); it reads GARYCPSIEDKIVRF. Position 371 (Q371) interacts with FAD.

The protein belongs to the MnmG family. In terms of assembly, homodimer. Heterotetramer of two MnmE and two MnmG subunits. FAD serves as cofactor.

It localises to the cytoplasm. In terms of biological role, NAD-binding protein involved in the addition of a carboxymethylaminomethyl (cmnm) group at the wobble position (U34) of certain tRNAs, forming tRNA-cmnm(5)s(2)U34. This Listeria monocytogenes serotype 4b (strain F2365) protein is tRNA uridine 5-carboxymethylaminomethyl modification enzyme MnmG.